The following is a 1168-amino-acid chain: Protein VARIATION IN COMPOUND TRIGGERED ROOT growth response (1168 aa).

One can recognise a TIR domain in the interval 10–171 (WVYDVFLSFS…EIANDVLAKL (162 aa)). Residue E85 is part of the active site. Residues 187-452 (EDHIANMSVL…ACLFNHVKVR (266 aa)) form the NB-ARC domain. 10 LRR repeats span residues 539 to 562 (TSKVSEFCVHENAFKGMGNLLFLD), 606 to 629 (LRNLVKLEMHDSKLEKLWEGAMSF), 631 to 653 (CLKELDMWASKYLKEIPDLSKAT), 676 to 699 (LNKLLELNMEYCGELETLPTGFNL), 701 to 720 (SLDYLNFNECWKLRTFPEFA), 721 to 744 (TNISNLILAETSIEEYPSNLYFKN), 795 to 820 (LNNLERLDICYCRNLESLPTGINLES), 839 to 865 (STNIKYLDLDQTGIEEVPWQIENFFNL), 873 to 896 (CRELKCVSLNIFKLKHLGEVSFSN), and 1065 to 1089 (NVPLSQLNYDHVDINIHITSGDWRS).

This sequence belongs to the disease resistance NB-LRR family. Part of a nuclear protein complex made of VICTR, PAD4 and EDS1. Interacts (via TIR domain) with PAD4 and EDS1.

It is found in the cytoplasm. The protein localises to the nucleus. The catalysed reaction is NAD(+) + H2O = ADP-D-ribose + nicotinamide + H(+). Disease resistance protein of the TIR-NB-LRR-type. Part of the RPS6 locus that contains a cluster of several paralogous disease resistance (R) genes. Resistance proteins guard the plant against pathogens that contain an appropriate avirulence protein via an indirect interaction with this avirulence protein. That triggers a defense system including the hypersensitive response, which restricts the pathogen growth. Required for [5-(3,4-dichlorophenyl)furan-2-yl]-piperidine-1-ylmethanethione-(DFPM-) induced root growth arrest due to reduced number of meristem cells in the division zone of the primary root and inhibition of abscisic acid- (ABA-) induced stomatal closing. In Arabidopsis thaliana (Mouse-ear cress), this protein is Protein VARIATION IN COMPOUND TRIGGERED ROOT growth response (VICTR).